Consider the following 876-residue polypeptide: Eukaryotic translation initiation factor 3 subunit C (876 aa).

Disordered regions lie at residues 1–25 (MSRF…VVRA) and 154–233 (SXFR…IREQ). The span at 11–20 (SESESSSEDE) shows a compositional bias: acidic residues. Basic and acidic residues-rich tracts occupy residues 154 to 172 (SXFR…KDSS) and 182 to 192 (KPIKEKPKPEP). A compositionally biased stretch (low complexity) spans 206 to 219 (SMDWASSSSDSSFS). The region spanning 632–808 (FHMHINLELL…ECAILHRSEP (177 aa)) is the PCI domain. The disordered stretch occupies residues 839 to 876 (FFQRGGAQRGEGRQRERPREGWNRRTRNRRRDDERADD). Basic and acidic residues predominate over residues 848–861 (GEGRQRERPREGWN).

The protein belongs to the eIF-3 subunit C family. As to quaternary structure, component of the eukaryotic translation initiation factor 3 (eIF-3) complex.

The protein localises to the cytoplasm. Component of the eukaryotic translation initiation factor 3 (eIF-3) complex, which is involved in protein synthesis of a specialized repertoire of mRNAs and, together with other initiation factors, stimulates binding of mRNA and methionyl-tRNAi to the 40S ribosome. The eIF-3 complex specifically targets and initiates translation of a subset of mRNAs involved in cell proliferation. The chain is Eukaryotic translation initiation factor 3 subunit C from Bombyx mori (Silk moth).